The following is a 173-amino-acid chain: Ribosome maturation factor RimM (173 aa).

One can recognise a PRC barrel domain in the interval 96–169 (PDEYYDHQLE…LVEIDPPEGL (74 aa)).

Belongs to the RimM family. In terms of assembly, binds ribosomal protein uS19.

It is found in the cytoplasm. An accessory protein needed during the final step in the assembly of 30S ribosomal subunit, possibly for assembly of the head region. Essential for efficient processing of 16S rRNA. May be needed both before and after RbfA during the maturation of 16S rRNA. It has affinity for free ribosomal 30S subunits but not for 70S ribosomes. This is Ribosome maturation factor RimM from Mycobacterium sp. (strain JLS).